A 218-amino-acid polypeptide reads, in one-letter code: Pyridoxine/pyridoxamine 5'-phosphate oxidase (218 aa).

Residues 66–71 (RVVLLK), Arg87, Lys88, and Gln110 each bind FMN. Substrate is bound at residue Lys71. 3 residues coordinate substrate: Tyr128, Arg132, and Ser136. FMN-binding positions include 145 to 146 (QS) and Trp190. 196-198 (RLH) is a substrate binding site. Arg200 serves as a coordination point for FMN.

Belongs to the pyridoxamine 5'-phosphate oxidase family. Homodimer. Requires FMN as cofactor.

The enzyme catalyses pyridoxamine 5'-phosphate + O2 + H2O = pyridoxal 5'-phosphate + H2O2 + NH4(+). It catalyses the reaction pyridoxine 5'-phosphate + O2 = pyridoxal 5'-phosphate + H2O2. It participates in cofactor metabolism; pyridoxal 5'-phosphate salvage; pyridoxal 5'-phosphate from pyridoxamine 5'-phosphate: step 1/1. It functions in the pathway cofactor metabolism; pyridoxal 5'-phosphate salvage; pyridoxal 5'-phosphate from pyridoxine 5'-phosphate: step 1/1. Catalyzes the oxidation of either pyridoxine 5'-phosphate (PNP) or pyridoxamine 5'-phosphate (PMP) into pyridoxal 5'-phosphate (PLP). This Anaplasma marginale (strain St. Maries) protein is Pyridoxine/pyridoxamine 5'-phosphate oxidase.